A 483-amino-acid polypeptide reads, in one-letter code: UDP-N-acetylmuramoyl-L-alanyl-D-glutamate--L-lysine ligase (483 aa).

A UDP-N-acetyl-alpha-D-muramoyl-L-alanyl-D-glutamate-binding site is contributed by Ser-44. 120-126 lines the ATP pocket; that stretch reads GTKGKTT. UDP-N-acetyl-alpha-D-muramoyl-L-alanyl-D-glutamate is bound by residues 162-163, Ser-189, and Arg-197; that span reads TT. Lys-231 is modified (N6-carboxylysine). An L-lysine recognition motif motif is present at residues 406-409; sequence DDPN.

It belongs to the MurCDEF family. MurE subfamily. In terms of processing, carboxylation is probably crucial for Mg(2+) binding and, consequently, for the gamma-phosphate positioning of ATP.

It localises to the cytoplasm. The enzyme catalyses UDP-N-acetyl-alpha-D-muramoyl-L-alanyl-D-glutamate + L-lysine + ATP = UDP-N-acetyl-alpha-D-muramoyl-L-alanyl-gamma-D-glutamyl-L-lysine + ADP + phosphate + H(+). It functions in the pathway cell wall biogenesis; peptidoglycan biosynthesis. In terms of biological role, catalyzes the addition of L-lysine to the nucleotide precursor UDP-N-acetylmuramoyl-L-alanyl-D-glutamate (UMAG) in the biosynthesis of bacterial cell-wall peptidoglycan. This is UDP-N-acetylmuramoyl-L-alanyl-D-glutamate--L-lysine ligase from Streptococcus mutans serotype c (strain ATCC 700610 / UA159).